An 85-amino-acid chain; its full sequence is Large ribosomal subunit protein bL27 (85 aa).

Residues 1 to 20 (MAHKKAGGSTRNGRDSESKR) are disordered.

It belongs to the bacterial ribosomal protein bL27 family.

The chain is Large ribosomal subunit protein bL27 from Yersinia enterocolitica serotype O:8 / biotype 1B (strain NCTC 13174 / 8081).